We begin with the raw amino-acid sequence, 601 residues long: Aspartate--tRNA ligase (601 aa).

Glu183 is a binding site for L-aspartate. The tract at residues 207-210 (QIFK) is aspartate. Arg229 serves as a coordination point for L-aspartate. ATP contacts are provided by residues 229–231 (RDE) and Gln238. Position 457 (His457) interacts with L-aspartate. Residue Glu497 coordinates ATP. Arg504 is an L-aspartate binding site. ATP is bound at residue 549–552 (GIDR).

Belongs to the class-II aminoacyl-tRNA synthetase family. Type 1 subfamily. In terms of assembly, homodimer.

The protein localises to the cytoplasm. It catalyses the reaction tRNA(Asp) + L-aspartate + ATP = L-aspartyl-tRNA(Asp) + AMP + diphosphate. Its function is as follows. Catalyzes the attachment of L-aspartate to tRNA(Asp) in a two-step reaction: L-aspartate is first activated by ATP to form Asp-AMP and then transferred to the acceptor end of tRNA(Asp). This chain is Aspartate--tRNA ligase, found in Leptospira interrogans serogroup Icterohaemorrhagiae serovar copenhageni (strain Fiocruz L1-130).